The primary structure comprises 436 residues: Chromosomal replication initiator protein DnaA (436 aa).

Residues 1 to 69 form a domain I, interacts with DnaA modulators region; that stretch reads MLADEVIELL…ANIFEVKTGI (69 aa). The interval 69–99 is domain II; it reads IKPVISITTQKNRVSIKAKDIDVKQIRTQSS. Residues 100 to 314 form a domain III, AAA+ region region; sequence LLNPSYTFES…SAIININAFA (215 aa). Residues glycine 144, glycine 146, lysine 147, and threonine 148 each contribute to the ATP site. The tract at residues 315-436 is domain IV, binds dsDNA; the sequence is NIMRQEITLE…ELKNKITSKE (122 aa).

It belongs to the DnaA family. As to quaternary structure, oligomerizes as a right-handed, spiral filament on DNA at oriC.

Its subcellular location is the cytoplasm. In terms of biological role, plays an essential role in the initiation and regulation of chromosomal replication. ATP-DnaA binds to the origin of replication (oriC) to initiate formation of the DNA replication initiation complex once per cell cycle. Binds the DnaA box (a 9 base pair repeat at the origin) and separates the double-stranded (ds)DNA. Forms a right-handed helical filament on oriC DNA; dsDNA binds to the exterior of the filament while single-stranded (ss)DNA is stabiized in the filament's interior. The ATP-DnaA-oriC complex binds and stabilizes one strand of the AT-rich DNA unwinding element (DUE), permitting loading of DNA polymerase. After initiation quickly degrades to an ADP-DnaA complex that is not apt for DNA replication. Binds acidic phospholipids. The sequence is that of Chromosomal replication initiator protein DnaA from Campylobacter fetus subsp. fetus (strain 82-40).